Here is a 223-residue protein sequence, read N- to C-terminus: 7-cyano-7-deazaguanine synthase (223 aa).

Residue 8–18 (LSGGLDSATTL) coordinates ATP. 4 residues coordinate Zn(2+): C187, C197, C200, and C203.

It belongs to the QueC family. The cofactor is Zn(2+).

It carries out the reaction 7-carboxy-7-deazaguanine + NH4(+) + ATP = 7-cyano-7-deazaguanine + ADP + phosphate + H2O + H(+). It functions in the pathway purine metabolism; 7-cyano-7-deazaguanine biosynthesis. Functionally, catalyzes the ATP-dependent conversion of 7-carboxy-7-deazaguanine (CDG) to 7-cyano-7-deazaguanine (preQ(0)). In Methylococcus capsulatus (strain ATCC 33009 / NCIMB 11132 / Bath), this protein is 7-cyano-7-deazaguanine synthase.